We begin with the raw amino-acid sequence, 485 residues long: Ataxin-10 (485 aa).

This sequence belongs to the ataxin-10 family.

It localises to the cytoplasm. The protein resides in the perinuclear region. The protein localises to the midbody. May play a role in the regulation of cytokinesis. May play a role in signaling by stimulating protein glycosylation. Induces neuritogenesis by activating the Ras-MAP kinase pathway and is necessary for the survival of cerebellar neurons. Does not appear to play a major role in ciliogenesis. This Xenopus tropicalis (Western clawed frog) protein is Ataxin-10 (atxn10).